The sequence spans 290 residues: Poly-beta-1,6-N-acetyl-D-glucosamine N-deacetylase (290 aa).

Positions 1-28 are cleaved as a signal peptide; that stretch reads MKYRKFIILVLSILIILPVSTLDGHHIA. One can recognise a NodB homology domain in the interval 114 to 290; the sequence is RSVWINFDDM…KRWDGFHEKD (177 aa).

It belongs to the polysaccharide deacetylase family.

It is found in the secreted. Its subcellular location is the cell wall. Catalyzes the N-deacetylation of poly-beta-1,6-N-acetyl-D-glucosamine (PNAG, also referred to as PIA), a biofilm adhesin polysaccharide. N-deacetylation is crucial for attachment of the polysaccharide to the bacterial cell surface; it leads to the introduction of positive charges in the otherwise neutral PIA polymer, allowing electrostatic interactions. The sequence is that of Poly-beta-1,6-N-acetyl-D-glucosamine N-deacetylase (icaB) from Staphylococcus aureus (strain NCTC 8325 / PS 47).